The chain runs to 726 residues: tRNA endonuclease ANKZF1 (726 aa).

The tract at residues 40-61 (LARAPRTSCSGSGERESPERKL) is disordered. A compositionally biased stretch (basic and acidic residues) spans 52 to 61 (GERESPERKL). The C2H2-type zinc finger occupies 72–96 (LFCSTCDQTFQNHQEQREHYKLDWH). The span at 120–130 (STGDLSSISGS) shows a compositional bias: low complexity. Positions 120–141 (STGDLSSISGSEDSDSASEEDL) are disordered. A compositionally biased stretch (acidic residues) spans 131–141 (EDSDSASEEDL). The VLRF1 domain maps to 203 to 346 (GPRDCVVLMA…QRVLHKLTTL (144 aa)). The active site involves Gln-246. Ser-258, Ser-361, and Ser-398 each carry phosphoserine. Disordered regions lie at residues 387–409 (DEKE…EGED) and 436–474 (RRRR…SSQA). Residues 436 to 445 (RRRRKRNKKE) show a composition bias toward basic residues. Low complexity predominate over residues 457-473 (TLLQQTQEEEPSTQSSQ). Residues 493 to 526 (ELWNALLAACRAGDVGVLKLQLAPSPADPRVLSL) form an ANK 1 repeat. Ser-533 carries the post-translational modification Phosphoserine. The ANK 2 repeat unit spans residues 534 to 563 (GGFTLLHAAAAAGRGSVVRLLLEAGADPTV). Positions 588 to 656 (MEKNPDAYDY…RRFAALSDRE (69 aa)) are disordered. Thr-607 carries the phosphothreonine modification. Residues 609-659 (EMEARQATRKREQKAARRQREEQQQRQQEQEEREREEQRRFAALSDREKRA) are a coiled coil. Over residues 610–656 (MEARQATRKREQKAARRQREEQQQRQQEQEEREREEQRRFAALSDRE) the composition is skewed to basic and acidic residues. The interval 654–666 (DREKRALAAERRL) is VCP/p97-interacting motif (VIM). A phosphoserine mark is found at Ser-675 and Ser-680.

This sequence belongs to the ANKZF1/VMS1 family. As to quaternary structure, interacts (via VIM motif) with VCP.

The protein resides in the cytoplasm. Its function is as follows. Endonuclease that cleaves polypeptidyl-tRNAs downstream of the ribosome-associated quality control (RQC) pathway to release incompletely synthesized polypeptides for degradation. The RQC pathway disassembles aberrantly stalled translation complexes to recycle or degrade the constituent parts. ANKZF1 acts downstream disassembly of stalled ribosomes and specifically cleaves off the terminal 3'-CCA nucleotides universal to all tRNAs from polypeptidyl-tRNAs, releasing (1) ubiquitinated polypeptides from 60S ribosomal subunit for degradation and (2) cleaved tRNAs. ANKZF1-cleaved tRNAs are then repaired and recycled by ELAC1 and TRNT1. Also plays a role in the cellular response to hydrogen peroxide and in the maintenance of mitochondrial integrity under conditions of cellular stress. The chain is tRNA endonuclease ANKZF1 from Homo sapiens (Human).